The chain runs to 109 residues: uncharacterized protein (109 aa).

A run of 2 helical transmembrane segments spans residues serine 24 to valine 44 and valine 68 to isoleucine 88.

Its subcellular location is the membrane. This is an uncharacterized protein from Saccharomyces cerevisiae (strain ATCC 204508 / S288c) (Baker's yeast).